The chain runs to 264 residues: S-adenosylmethionine decarboxylase proenzyme (264 aa).

Residue Ser113 is the Schiff-base intermediate with substrate; via pyruvic acid of the active site. At Ser113 the chain carries Pyruvic acid (Ser); by autocatalysis. Residue His118 is the Proton acceptor; for processing activity of the active site. Cys141 functions as the Proton donor; for catalytic activity in the catalytic mechanism.

It belongs to the prokaryotic AdoMetDC family. Type 2 subfamily. As to quaternary structure, heterooctamer of four alpha and four beta chains arranged as a tetramer of alpha/beta heterodimers. Requires pyruvate as cofactor. In terms of processing, is synthesized initially as an inactive proenzyme. Formation of the active enzyme involves a self-maturation process in which the active site pyruvoyl group is generated from an internal serine residue via an autocatalytic post-translational modification. Two non-identical subunits are generated from the proenzyme in this reaction, and the pyruvate is formed at the N-terminus of the alpha chain, which is derived from the carboxyl end of the proenzyme. The post-translation cleavage follows an unusual pathway, termed non-hydrolytic serinolysis, in which the side chain hydroxyl group of the serine supplies its oxygen atom to form the C-terminus of the beta chain, while the remainder of the serine residue undergoes an oxidative deamination to produce ammonia and the pyruvoyl group blocking the N-terminus of the alpha chain.

The catalysed reaction is S-adenosyl-L-methionine + H(+) = S-adenosyl 3-(methylsulfanyl)propylamine + CO2. The protein operates within amine and polyamine biosynthesis; S-adenosylmethioninamine biosynthesis; S-adenosylmethioninamine from S-adenosyl-L-methionine: step 1/1. Catalyzes the decarboxylation of S-adenosylmethionine to S-adenosylmethioninamine (dcAdoMet), the propylamine donor required for the synthesis of the polyamines spermine and spermidine from the diamine putrescine. The chain is S-adenosylmethionine decarboxylase proenzyme from Hahella chejuensis (strain KCTC 2396).